A 947-amino-acid polypeptide reads, in one-letter code: ATPase 10, plasma membrane-type (947 aa).

Topologically, residues 1-69 (MAEDLDKPLL…EKQENRFVKF (69 aa)) are cytoplasmic. Residues 70–89 (LGFMWNPLSWVMEAAALMAI) form a helical membrane-spanning segment. Residues 90 to 101 (ALANSQSLGPDW) are Extracellular-facing. A helical membrane pass occupies residues 102 to 122 (EDFTGIVCLLLINATISFFEE). Residues 123 to 251 (NNAGNAAAAL…GHFQQVLTSI (129 aa)) lie on the Cytoplasmic side of the membrane. The chain crosses the membrane as a helical span at residues 252–272 (GNFCICSIAVGMVLEIIIMFP). The Extracellular portion of the chain corresponds to 273-281 (VQHRSYRIG). A helical transmembrane segment spans residues 282–299 (INNLLVLLIGGIPIAMPT). Topologically, residues 300–650 (VLSVTLAIGS…TSRAIFQRMR (351 aa)) are cytoplasmic. Aspartate 337 functions as the 4-aspartylphosphate intermediate in the catalytic mechanism. Residues aspartate 595 and aspartate 599 each coordinate Mg(2+). The chain crosses the membrane as a helical span at residues 651–672 (NYTVYAVSITIRIVLGFTLLAL). Residues 673–677 (IWEYD) lie on the Extracellular side of the membrane. The chain crosses the membrane as a helical span at residues 678–700 (FPPFMVLIIAILNDGTIMTISKD). Residues 701 to 716 (RVRPSPTPESWKLNQI) are Cytoplasmic-facing. The chain crosses the membrane as a helical span at residues 717–737 (FATGIVIGTYLALVTVLFYWI). Residues 738-758 (IVSTTFFEKHFHVKSIANNSE) are Extracellular-facing. A helical membrane pass occupies residues 759–779 (QVSSAMYLQVSIISQALIFVT). Residues 780-791 (RSRGWSFFERPG) lie on the Cytoplasmic side of the membrane. Residues 792-812 (TLLIFAFILAQLAATLIAVYA) form a helical membrane-spanning segment. The Extracellular segment spans residues 813-820 (NISFAKIT). A helical transmembrane segment spans residues 821–841 (GIGWRWAGVIWLYSLIFYIPL). The Cytoplasmic portion of the chain corresponds to 842–947 (DVIKFVFHYA…QRMIRAAHTV (106 aa)). Residues serine 897 and serine 929 each carry the phosphoserine modification. A Phosphothreonine modification is found at threonine 946.

The protein belongs to the cation transport ATPase (P-type) (TC 3.A.3) family. Type IIIA subfamily. In terms of tissue distribution, found primarily in developing seeds. Expressed in guard cells, mesophyll cells, leaves and roots.

It localises to the membrane. The catalysed reaction is ATP + H2O + H(+)(in) = ADP + phosphate + 2 H(+)(out). In terms of biological role, the plasma membrane H(+) ATPase of plants and fungi generates a proton gradient that drives the active transport of nutrients by H(+)-symport. The resulting external acidification and/or internal alkinization may mediate growth responses. This chain is ATPase 10, plasma membrane-type (AHA10), found in Arabidopsis thaliana (Mouse-ear cress).